The sequence spans 56 residues: Small ribosomal subunit protein bS21 (56 aa).

It belongs to the bacterial ribosomal protein bS21 family.

The sequence is that of Small ribosomal subunit protein bS21 from Dictyoglomus thermophilum (strain ATCC 35947 / DSM 3960 / H-6-12).